The chain runs to 483 residues: Glutamate--tRNA ligase (483 aa).

A 'HIGH' region motif is present at residues 11-21; the sequence is PSPTGHLHIGN. Positions 108, 110, 135, and 137 each coordinate Zn(2+). A 'KMSKS' region motif is present at residues 252–256; it reads KLSKR. Lys255 is a binding site for ATP.

The protein belongs to the class-I aminoacyl-tRNA synthetase family. Glutamate--tRNA ligase type 1 subfamily. As to quaternary structure, monomer. Zn(2+) is required as a cofactor.

It is found in the cytoplasm. It catalyses the reaction tRNA(Glu) + L-glutamate + ATP = L-glutamyl-tRNA(Glu) + AMP + diphosphate. In terms of biological role, catalyzes the attachment of glutamate to tRNA(Glu) in a two-step reaction: glutamate is first activated by ATP to form Glu-AMP and then transferred to the acceptor end of tRNA(Glu). This Bacillus pumilus (strain SAFR-032) protein is Glutamate--tRNA ligase.